A 247-amino-acid polypeptide reads, in one-letter code: Potassium channel Ftrac_2467 (247 aa).

6 consecutive transmembrane segments (helical) span residues 23-44, 56-78, 89-117, 142-165, 187-210, and 215-237; these read TRIE…VLSS, SMRD…YQHY, KVTI…RFLS, LKLL…LMYW, SIIA…IDPW, and TTIL…GRIT. Residues 24–30 carry the RxxxFSD motif motif; sequence RIETFSD.

Belongs to the TMEM175 family. As to quaternary structure, homotetramer.

It localises to the cell membrane. The enzyme catalyses K(+)(in) = K(+)(out). In terms of biological role, potassium channel; forms a potassium-permeable leak-like channel with weak selectivity for potassium. The channel is permeable for K(+), Rb(+) and Cs(+). This chain is Potassium channel Ftrac_2467, found in Marivirga tractuosa (strain ATCC 23168 / DSM 4126 / NBRC 15989 / NCIMB 1408 / VKM B-1430 / H-43) (Microscilla tractuosa).